A 151-amino-acid polypeptide reads, in one-letter code: MKARRQRKILELIKAGLVKTQEDMVNALKECGFNVTQATVSRDIKELGLIKIPGGNNAFRYALPGDRPFIRGEERLRRVFRDSVIGLDSSENLIIVKTHPGGAQGVASAIDQAGWREIIGTVGGDDTILVVVKPKRAAGAVLKRFEELSGG.

Belongs to the ArgR family.

Its subcellular location is the cytoplasm. It functions in the pathway amino-acid biosynthesis; L-arginine biosynthesis [regulation]. Functionally, regulates arginine biosynthesis genes. This Pelotomaculum thermopropionicum (strain DSM 13744 / JCM 10971 / SI) protein is Arginine repressor.